The chain runs to 608 residues: Glutamine--fructose-6-phosphate aminotransferase [isomerizing] (608 aa).

Cysteine 2 acts as the Nucleophile; for GATase activity in catalysis. Residues 2-217 form the Glutamine amidotransferase type-2 domain; the sequence is CGIVGIVGNQ…DGDWAVIGKT (216 aa). SIS domains lie at 281-422 and 456-598; these read ISDA…ARGT and LSRE…VDQP. Residue lysine 603 is the For Fru-6P isomerization activity of the active site.

In terms of assembly, homodimer.

The protein localises to the cytoplasm. It catalyses the reaction D-fructose 6-phosphate + L-glutamine = D-glucosamine 6-phosphate + L-glutamate. Functionally, catalyzes the first step in hexosamine metabolism, converting fructose-6P into glucosamine-6P using glutamine as a nitrogen source. The protein is Glutamine--fructose-6-phosphate aminotransferase [isomerizing] of Rhizobium meliloti (strain 1021) (Ensifer meliloti).